The chain runs to 344 residues: Protein pelota homolog (344 aa).

Belongs to the eukaryotic release factor 1 family. Pelota subfamily. Monomer. A divalent metal cation is required as a cofactor.

Its subcellular location is the cytoplasm. May function in recognizing stalled ribosomes, interact with stem-loop structures in stalled mRNA molecules, and effect endonucleolytic cleavage of the mRNA. May play a role in the release non-functional ribosomes and degradation of damaged mRNAs. Has endoribonuclease activity. The protein is Protein pelota homolog of Saccharolobus islandicus (strain M.14.25 / Kamchatka #1) (Sulfolobus islandicus).